The chain runs to 863 residues: Dynamin-3 (863 aa).

Residues 28–294 (LLELPQIAVV…LTNHIRDTLP (267 aa)) form the Dynamin-type G domain. A G1 motif region spans residues 38-45 (GGQSAGKS). Residue 38–46 (GGQSAGKSS) participates in GTP binding. The interval 64–66 (VTR) is G2 motif. The G3 motif stretch occupies residues 136-139 (DLPG). Residues 205–208 (TKLD) are G4 motif. 205-211 (TKLDLMD) is a binding site for GTP. At Tyr-231 the chain carries Phosphotyrosine. A G5 motif region spans residues 235-238 (VNRS). Residue 236–239 (NRSQ) participates in GTP binding. Residue Lys-299 is modified to N6-acetyllysine. The 107-residue stretch at 515–621 (QVIRKGWLTV…WKASLLRAGV (107 aa)) folds into the PH domain. A Phosphotyrosine modification is found at Tyr-593. N6-acetyllysine is present on Lys-594. 2 disordered regions span residues 626-647 (SVGS…SMDP) and 742-863 (ATVS…SLLD). Residues 627–642 (VGSNKTENDENGQAEN) are compositionally biased toward polar residues. A GED domain is found at 653-744 (VETIRNLVDS…IIGDINTATV (92 aa)). Phosphoserine occurs at positions 763 and 767. Composition is skewed to pro residues over residues 791-816 (PAIP…PPFP) and 826-849 (PQVP…PSPT). Ser-847 carries the post-translational modification Phosphoserine.

The protein belongs to the TRAFAC class dynamin-like GTPase superfamily. Dynamin/Fzo/YdjA family.

The protein resides in the cytoplasm. The protein localises to the cytoskeleton. The catalysed reaction is GTP + H2O = GDP + phosphate + H(+). Functionally, microtubule-associated force-producing protein involved in producing microtubule bundles and able to bind and hydrolyze GTP. Most probably involved in vesicular trafficking processes, in particular endocytosis. The sequence is that of Dynamin-3 (Dnm3) from Mus musculus (Mouse).